Reading from the N-terminus, the 998-residue chain is SEC23-interacting protein (998 aa).

Residues 1 to 363 (MADRKANGGG…YTEEFSEKLE (363 aa)) form an interaction with SEC23A region. The interval 50-246 (LPGEDSTDVG…AQQQVPARPA (197 aa)) is disordered. Positions 54–63 (DSTDVGEEDS) are enriched in acidic residues. Residues 65-78 (LGQTSTHTSTPQTF) are compositionally biased toward polar residues. Residues 79–88 (SYFSQVSSSS) show a composition bias toward low complexity. Composition is skewed to polar residues over residues 94-108 (IGQSPLTTSAMSAGQ), 143-158 (PPSQMGTSTYSPSQPS), and 232-241 (AMQSPAQQQV). Phosphoserine is present on serine 600. The 64-residue stretch at 640 to 703 (EEPLTLHGTL…NFVKLKAAKL (64 aa)) folds into the SAM domain. The interval 720–742 (TKGQDESAPKTKEMASPSSESNE) is disordered. Basic and acidic residues predominate over residues 722–732 (GQDESAPKTKE). A phosphoserine mark is found at serine 735, serine 748, and serine 924. In terms of domain architecture, DDHD spans 777–987 (LDFEPEIFFA…ALLLLKEIYR (211 aa)).

Belongs to the PA-PLA1 family. Interacts with SEC23A.

It localises to the cytoplasmic vesicle. The protein localises to the COPII-coated vesicle membrane. Its subcellular location is the endoplasmic reticulum. Functionally, plays a role in the organization of endoplasmic reticulum exit sites. Specifically binds to phosphatidylinositol 3-phosphate (PI(3)P), phosphatidylinositol 4-phosphate (PI(4)P) and phosphatidylinositol 5-phosphate (PI(5)P). In Mus musculus (Mouse), this protein is SEC23-interacting protein (Sec23ip).